The chain runs to 219 residues: Ribose-5-phosphate isomerase A (219 aa).

Substrate-binding positions include 28–31 (TGST), 81–84 (DGAD), and 94–97 (KGGG). The Proton acceptor role is filled by E103. K121 is a binding site for substrate.

The protein belongs to the ribose 5-phosphate isomerase family. In terms of assembly, homodimer.

The catalysed reaction is aldehydo-D-ribose 5-phosphate = D-ribulose 5-phosphate. Its pathway is carbohydrate degradation; pentose phosphate pathway; D-ribose 5-phosphate from D-ribulose 5-phosphate (non-oxidative stage): step 1/1. In terms of biological role, catalyzes the reversible conversion of ribose-5-phosphate to ribulose 5-phosphate. The chain is Ribose-5-phosphate isomerase A from Pectobacterium atrosepticum (strain SCRI 1043 / ATCC BAA-672) (Erwinia carotovora subsp. atroseptica).